Consider the following 568-residue polypeptide: MMGCWILNEGLSTILVLSWLGINFYLFIDTFYWYEEEESFHYTRVILGSTLAWARASALCLNFNCMLILIPVSRNLISFIRGTSICCRGPWRRQLDKNLRFHKLVAYGIAVNATIHIVAHFFNLERYHWSQSEEAQGLLAALSKLGNTPNESYLNPVRTFPTNTTTELLRTIAGVTGLVISLALVLIMTSSTEFIRQASYELFWYTHHVFIVFFLSLAIHGTGRIVRGQTQDSLSLHNITFCRDRYAEWQTVAQCPVPQFSGKEPSAWKWILGPVVLYACERIIRFWRFQQEVVITKVVSHPSGVLELHMKKRGFKMAPGQYILVQCPAISSLEWHPFTLTSAPQEDFFSVHIRAAGDWTAALLEAFGAEGQALQEPWSLPRLAVDGPFGTALTDVFHYPVCVCVAAGIGVTPFAALLKSIWYKCSEAQTPLKLSKVYFYWICRDARAFEWFADLLLSLETRMSEQGKTHFLSYHIFLTGWDENQALHIALHWDENTDVITGLKQKTFYGRPNWNNEFKQIAYNHPSSSIGVFFCGPKALSRTLQKMCHLYSSADPRGVHFYYNKESF.

At 1–13 (MMGCWILNEGLST) the chain is on the cytoplasmic side. Residues 14–34 (ILVLSWLGINFYLFIDTFYWY) traverse the membrane as a helical segment. Topologically, residues 35 to 51 (EEEESFHYTRVILGSTL) are extracellular. Residues 52–72 (AWARASALCLNFNCMLILIPV) traverse the membrane as a helical segment. Residues 55-284 (RASALCLNFN…VVLYACERII (230 aa)) form the Ferric oxidoreductase domain. Residues 73–103 (SRNLISFIRGTSICCRGPWRRQLDKNLRFHK) are Cytoplasmic-facing. The chain crosses the membrane as a helical span at residues 104–124 (LVAYGIAVNATIHIVAHFFNL). Topologically, residues 125 to 167 (ERYHWSQSEEAQGLLAALSKLGNTPNESYLNPVRTFPTNTTTE) are extracellular. The N-linked (GlcNAc...) asparagine glycan is linked to Asn163. A helical membrane pass occupies residues 168–188 (LLRTIAGVTGLVISLALVLIM). Residues 189–201 (TSSTEFIRQASYE) lie on the Cytoplasmic side of the membrane. A helical transmembrane segment spans residues 202–222 (LFWYTHHVFIVFFLSLAIHGT). Over 223-395 (GRIVRGQTQD…DGPFGTALTD (173 aa)) the chain is Extracellular. Asn238 carries an N-linked (GlcNAc...) asparagine glycan. Residues 285–395 (RFWRFQQEVV…DGPFGTALTD (111 aa)) form the FAD-binding FR-type domain. The helical transmembrane segment at 396–416 (VFHYPVCVCVAAGIGVTPFAA) threads the bilayer. Topologically, residues 417-568 (LLKSIWYKCS…VHFYYNKESF (152 aa)) are cytoplasmic.

In terms of assembly, interacts with CYBA/p22phox. Heterodimerization with CYBA/p22phox is essential for its activity and cell membrane localization. It depends on heme as a cofactor. N-glycosylated in a CYBA/p22phox-dependent manner.

Its subcellular location is the cell membrane. The catalysed reaction is NADPH + 2 O2 = 2 superoxide + NADP(+) + H(+). With respect to regulation, activated by the ototoxic drug cisplatin. Activated by NOXO1. Cooperatively activated by NCF1 and NCF2 or NOXA1 in a phorbol 12-myristate 13-acetate (PMA)-dependent manner. Inhibited by diphenyleneiodonium chloride. NADPH oxidase that catalyzes the generation of superoxide from molecular oxygen utilizing NADPH as an electron donor, upon formation of a complex with CYBA/p22phox. Plays a role in the biogenesis of otoconia/otolith, which are crystalline structures of the inner ear involved in the perception of gravity. The chain is NADPH oxidase 3 (NOX3) from Homo sapiens (Human).